A 229-amino-acid chain; its full sequence is Echinolectin 1 (229 aa).

Asparagine 94 carries N-linked (GlcNAc...) asparagine glycosylation.

Its subcellular location is the secreted. This chain is Echinolectin 1, found in Echinometra lucunter (Rock-boring urchin).